A 171-amino-acid polypeptide reads, in one-letter code: MDYFTLFGLPARYQLDTQALSLRFQDLQRQYHPDKFASGSQAEQLAAVQQSATINQAWQTLRHPLMRAEYLLSLHGFDLASEQHTVRDTAFLMEQLELREELDEIEQAKDEARLESFIKRVKKMFDTRHQLMVEQLDNEAWDAAADTVRKLRFLDKLRSSAEQLEEKLLDF.

The J domain maps to 2–74 (DYFTLFGLPA…LMRAEYLLSL (73 aa)).

Belongs to the HscB family. In terms of assembly, interacts with HscA and stimulates its ATPase activity. Interacts with IscU.

Functionally, co-chaperone involved in the maturation of iron-sulfur cluster-containing proteins. Seems to help targeting proteins to be folded toward HscA. This chain is Co-chaperone protein HscB, found in Escherichia coli (strain SE11).